A 304-amino-acid polypeptide reads, in one-letter code: Probable cobalamin biosynthesis protein CobD (304 aa).

5 helical membrane-spanning segments follow: residues 2 to 22 (IVVL…KEYI), 50 to 70 (ILFS…AVYL), 73 to 93 (FILV…FSIT), 147 to 167 (VDGY…GAFI), and 284 to 304 (AAYS…AVFL).

The protein belongs to the CobD/CbiB family.

It is found in the cell membrane. Its pathway is cofactor biosynthesis; adenosylcobalamin biosynthesis. Functionally, converts cobyric acid to cobinamide by the addition of aminopropanol on the F carboxylic group. This Thermoplasma volcanium (strain ATCC 51530 / DSM 4299 / JCM 9571 / NBRC 15438 / GSS1) protein is Probable cobalamin biosynthesis protein CobD.